Consider the following 276-residue polypeptide: RRP15-like protein (276 aa).

2 disordered regions span residues 1-132 (MALL…QLRV) and 201-276 (KRAK…DGEE). Composition is skewed to basic and acidic residues over residues 75–95 (FQKDAANKKPGFDFEIEKADV) and 226–245 (KGSSGKKKSEWSVLREDFMT). A compositionally biased stretch (acidic residues) spans 254–276 (EEDDDEEGHNDEADDSDYDDGEE). S269 carries the phosphoserine modification. Y271 carries the phosphotyrosine modification.

This sequence belongs to the RRP15 family.

This Drosophila melanogaster (Fruit fly) protein is RRP15-like protein.